A 364-amino-acid chain; its full sequence is DNA replication and repair protein RecF (364 aa).

30-37 (GNNGMGKT) is an ATP binding site.

Belongs to the RecF family.

Its subcellular location is the cytoplasm. The RecF protein is involved in DNA metabolism; it is required for DNA replication and normal SOS inducibility. RecF binds preferentially to single-stranded, linear DNA. It also seems to bind ATP. The chain is DNA replication and repair protein RecF from Porphyromonas gingivalis (strain ATCC 33277 / DSM 20709 / CIP 103683 / JCM 12257 / NCTC 11834 / 2561).